The primary structure comprises 307 residues: Type 2A encapsulin shell protein (307 aa).

Belongs to the encapsulin family. Family 2A subfamily. In terms of assembly, the encapsulin nanocompartment is formed by 60 subunits; monomers form pentamers which assemble to form shells. There are 12 charged pores where the pentamers meet as well as 3-fold axis channels and dimer channels. Isolated from bacteria in a complex with cysteine desulfurase (AC Q9KII6).

Its subcellular location is the encapsulin nanocompartment. It localises to the cell membrane. In terms of biological role, shell component of a type 2A encapsulin nanocompartment. Forms encapsulin nanocompartments about 24 nm in diameter from 60 monomers, probably involved in sulfur metabolism. Probably encapsulates cysteine desulfurase. The sequence is that of Type 2A encapsulin shell protein from Mycolicibacterium paratuberculosis (strain ATCC BAA-968 / K-10) (Mycobacterium paratuberculosis).